Consider the following 928-residue polypeptide: MHLKTGLIFLAICLALQVQGSREIPSKTNHGEAKQLADASGSDKTERTTKRSRVSTIRRIFDMAKHRTKRSPFFSTGVKICPQESVKQILASHQAYYRLRVCQEAVWEAFRIFLDRIPDTSEYQNWVTACQRETFCIFDIGKNFSNSQEHLEIIQRRVKHRTFQERKDEISTDKTGGKKLEDIPSVSTGPPSASLSTYTLVPNGTLLNEIVNETKTPVKELGTNTVPELPAEQMVEFSVTLTDQEYTAELSDPNSPQYRQLAAKFQLQMQKIFEKLPGFKEIHVLGFKQKKEKDGSSSTIARYMVNFERDGSEIKSTADDISTIGSNKVENEKVPLSAKEEREISATKLTVTDLQQLVATALHEDRSLPVDLGTLRFTDEPIKPSSDFDNDIQGMVTIPLAGPDLDDTISAELPLVYPSPITVDQTRDIFVDEFTTGITDLSREIGGPEDFDSNFITSEPAFPTKPSREPPHDRSPDTEDITTDYQRFTVPFSALVSTDSPAKPEDSYLPPPADESDSNDLITDESPTEQVITPAVYTTGSFTLPTFLQATDKDTEAEMKKELVGVTEPLFKEADRDSLSGQAVKMMDELESSGDDILVTTSTYKTLPFLIGSSDLFATQPEVTFAAALPPDQTLLPTVTSPFYSHSVVIDQSPEVPDTLMPAAASALPDRASTGVQDIAAELDGAGVKSTAVLDEAEHGSGYISVQTTEPAEVTQAPTLKYVTTSSMTTAAKGKELVVFFSLRVTNMHFSDDLFNRSSQEYKALEQQFMQLLLPYLQSNLTGFKQLEILNFRNGSVIVNSKMKFARTVPYNITEAVHCVLEDFCDAAAQHLNLEIDSYSLDIEPADQADPCKFMACDEFSKCIMNEWTKEADCLCKPGYASQDGLPCRSLCEMEPHLCDNGGKCELVPGRGAVCRSPDQFTEPGLTS.

Residues methionine 1 to glycine 20 form the signal peptide. The segment at serine 26 to lysine 50 is disordered. Over residues asparagine 29–threonine 49 the composition is skewed to basic and acidic residues. N-linked (GlcNAc...) asparagine glycosylation occurs at asparagine 143. The span at glutamine 164–aspartate 182 shows a compositional bias: basic and acidic residues. Residues glutamine 164–proline 191 are disordered. N-linked (GlcNAc...) asparagine glycosylation is found at asparagine 203 and asparagine 212. The SEA 1 domain maps to alanine 231–glutamine 356. 2 disordered regions span residues leucine 441–isoleucine 481 and alanine 494–isoleucine 522. The span at proline 466–aspartate 477 shows a compositional bias: basic and acidic residues. The SEA 2 domain maps to lysine 735 to glutamine 848. N-linked (GlcNAc...) asparagine glycans are attached at residues asparagine 756 and asparagine 780. A Heparin- and hyaluronan-binding motif is present at residues lysine 785–arginine 793. Asparagine 794 and asparagine 812 each carry an N-linked (GlcNAc...) asparagine glycan.

In terms of processing, highly glycosylated (N- and O-linked carbohydrates and sialic acid). Abundantly expressed in the retina (at protein level). Localizes to the photoreceptor layer of the interphotoreceptor matrix of the retina (at protein level).

It is found in the cell projection. The protein resides in the cilium. It localises to the photoreceptor outer segment. The protein localises to the secreted. Its subcellular location is the extracellular space. It is found in the extracellular matrix. The protein resides in the interphotoreceptor matrix. It localises to the photoreceptor inner segment. Its function is as follows. Chondroitin sulfate-, heparin- and hyaluronan-binding protein. May serve to form a basic macromolecular scaffold comprising the insoluble interphotoreceptor matrix. This chain is Interphotoreceptor matrix proteoglycan 1, found in Gallus gallus (Chicken).